We begin with the raw amino-acid sequence, 321 residues long: MERFVRVPYGLYQGYGSTVPLGQPGLSGHKQPDWRQNMGPPTFLARPGLLVPANAPDYCIDPYKRAQLKAILSQMNPSLSPRLCKPNTKEVGVQVSPRVDKAVQCSLGPRTLSSCSPWDGRDPQEPLPACGVTSPATGRRGLIRLRRDGDEAESKALPGPAEASQPQPPSRRSGADRQEEPGQLEESGEKDAPCPQETKSKQVPGDAASEPLRRPNFQFLEPKYGYFHCKDCKTRWESAYVWCISGTNKVYFKQLCCKCQKSFNPYRVEAIQCQTCSKSHCSCPQKKRHIDLRRPHRQELCGRCKDKRFSCGNIYSFKYVM.

The interval 110-214 is disordered; sequence RTLSSCSPWD…GDAASEPLRR (105 aa). Positions 145-154 are enriched in basic and acidic residues; that stretch reads LRRDGDEAES. The 3CxxC-type zinc finger occupies 222–307; that stretch reads PKYGYFHCKD…QELCGRCKDK (86 aa).

Belongs to the ZAR1 family. Interacts with YBX2.

The protein localises to the cytoplasm. The protein resides in the cytoplasmic ribonucleoprotein granule. Functionally, mRNA-binding protein required for maternal mRNA storage, translation and degradation during oocyte maturation. Probably promotes formation of some phase-separated membraneless compartment that stores maternal mRNAs in oocytes: acts by undergoing liquid-liquid phase separation upon binding to maternal mRNAs. Binds to the 3'-UTR of maternal mRNAs, inhibiting their translation. This is Protein ZAR1-like from Homo sapiens (Human).